Consider the following 575-residue polypeptide: MNRKYDNNNDKNIPLLSDNERIKKESNFLRGTIAQNLDNNLTGGFNTEDAQLIRFHGMYQQDDRDVRVERANQKLEPLINMMLRCRLPGGVIMPQQWLAIDDFSEKYTLYGTIRLTTRQTFQLHGLLKPNLKNVHRLLNKLGLDSIATAGDVNRNVICTANPMESTLHYQVWELAKSISSYLLPKSNAYAEIWLDSKKTESTDSEPILSATYLPRKFKIAIAIPPINDVDVHANDLSFIAIKSENTDQIIGFNVLVGGGLAMTYGDITTYPRKASAFGYISTKDVLKIAETVVTVQRDWGNRSDRRHAKTKYTLTRVGVTTFKSEVERRSGVQFHPIRPYVFTDRGDRFGWVQGIDDYWHLTLFIENGRISNNDPHKLLKRGIAEVAQIHSGSFRLTANQNLIISGVSKDNKLMIESTLRKYGVINDDITPQRKASMACVAFPTCPLAMAEAERFLPKFVTKIEHIMSKYRLEKDAIILRVTGCPNSCARAMLSEIGLTGRSIGRYNLYLGGNNIGTRIPRLYKENITENDILNILDTTISRWAQERNSQESYGDYVVRSGIVNAVINSEKDFYE.

Residues Cys-439, Cys-445, Cys-484, and Cys-488 each coordinate [4Fe-4S] cluster. Residue Cys-488 coordinates siroheme.

Belongs to the nitrite and sulfite reductase 4Fe-4S domain family. In terms of assembly, alpha(8)-beta(8). The alpha component is a flavoprotein, the beta component is a hemoprotein. Siroheme is required as a cofactor. [4Fe-4S] cluster serves as cofactor.

It carries out the reaction hydrogen sulfide + 3 NADP(+) + 3 H2O = sulfite + 3 NADPH + 4 H(+). Its pathway is sulfur metabolism; hydrogen sulfide biosynthesis; hydrogen sulfide from sulfite (NADPH route): step 1/1. Component of the sulfite reductase complex that catalyzes the 6-electron reduction of sulfite to sulfide. This is one of several activities required for the biosynthesis of L-cysteine from sulfate. In Blochmanniella pennsylvanica (strain BPEN), this protein is Sulfite reductase [NADPH] hemoprotein beta-component.